We begin with the raw amino-acid sequence, 174 residues long: Shikimate kinase 2 (174 aa).

12–17 (GCGKTT) is a binding site for ATP. Positions 16 and 32 each coordinate Mg(2+). Substrate contacts are provided by D34, R58, and G79. Residues 112–126 (RAYPEDDQRPSLTGK) form an LID domain region. R120 provides a ligand contact to ATP. R139 provides a ligand contact to substrate. Residue Q155 participates in ATP binding.

It belongs to the shikimate kinase family. AroL subfamily. As to quaternary structure, monomer. It depends on Mg(2+) as a cofactor.

Its subcellular location is the cytoplasm. The enzyme catalyses shikimate + ATP = 3-phosphoshikimate + ADP + H(+). It participates in metabolic intermediate biosynthesis; chorismate biosynthesis; chorismate from D-erythrose 4-phosphate and phosphoenolpyruvate: step 5/7. Its function is as follows. Catalyzes the specific phosphorylation of the 3-hydroxyl group of shikimic acid using ATP as a cosubstrate. The polypeptide is Shikimate kinase 2 (Sodalis glossinidius (strain morsitans)).